Here is a 684-residue protein sequence, read N- to C-terminus: Pentatricopeptide repeat-containing protein At4g14850 (684 aa).

PPR repeat units lie at residues 5-39 (SADALGLLLKNAISASSMRLGRVVHARIVKTLDSP), 41-71 (PPFLANYLINMYSKLDHPESARLVLRLTPAR), 72-106 (NVVSWTSLISGLAQNGHFSTALVEFFEMRREGVVP), 107-141 (NDFTFPCAFKAVASLRLPVTGKQIHALAVKCGRIL), 142-172 (DVFVGCSAFDMYCKTRLRDDARKLFDEIPER), 173-207 (NLETWNAFISNSVTDGRPREAIEAFIEFRRIDGHP), 208-242 (NSITFCAFLNACSDWLHLNLGMQLHGLVLRSGFDT), 243-277 (DVSVCNGLIDFYGKCKQIRSSEIIFTEMGTKNAVS), 278-308 (WCSLVAAYVQNHEDEKASVLYLRSRKDIVET), 309-343 (SDFMISSVLSACAGMAGLELGRSIHAHAVKACVER), 344-374 (TIFVGSALVDMYGKCGCIEDSEQAFDEMPEK), 375-409 (NLVTRNSLIGGYAHQGQVDMALALFEEMAPRGCGP), 412-442 (NYMTFVSLLSACSRAGAVENGMKIFDSMRST), and 448-478 (GAEHYSCIVDMLGRAGMVERAYEFIKKMPIQ). The interval 483–558 (VWGALQNACR…GAGYSWITVK (76 aa)) is type E motif; degenerate. The tract at residues 559 to 589 (NQVHAFQAKDRSHILNKEIQTTLAKLRNEME) is type E(+) motif; degenerate. The interval 590–684 (AAGYKPDLKL…DGICSCKDYW (95 aa)) is type DYW motif.

It belongs to the PPR family. PCMP-H subfamily.

Acts as a regulatory factor of isoprenoid biosynthesis. Could bind RNA. In Arabidopsis thaliana (Mouse-ear cress), this protein is Pentatricopeptide repeat-containing protein At4g14850 (LOI1).